Here is a 464-residue protein sequence, read N- to C-terminus: Argininosuccinate lyase (464 aa).

The protein belongs to the lyase 1 family. Argininosuccinate lyase subfamily.

The protein resides in the cytoplasm. The catalysed reaction is 2-(N(omega)-L-arginino)succinate = fumarate + L-arginine. The protein operates within amino-acid biosynthesis; L-arginine biosynthesis; L-arginine from L-ornithine and carbamoyl phosphate: step 3/3. The sequence is that of Argininosuccinate lyase from Ectopseudomonas mendocina (strain ymp) (Pseudomonas mendocina).